The sequence spans 354 residues: MDISNYVDNFYFDEKIASAFELGEVSTVDLLTLDITELERRTHCSQSELLQLIEQISLLLQPVRCSASKVTSKYLTTGDVKLDETLHGGIPVGQLTEICGESGSGKSQFCMQLCLMVQLPLSLGGMNKAAVFISTESGLETKRLFELARYLPERYPKADKKDIIIKNPGDRVYTILCPDLESQEHIIQYQLPILFNRDKIGLVILDSVASNYRAELRYNRSKSHFRDLDNIAKRGNQLGKLAMTLRTLAHQHEAAVVIANQVSDRIPRDYDAIGLFSLDYQSQWFSGWDDTDPNPKIPSLGLVWTNNISTRLALIKKTDSATNNSGRIFRVVYSPNSPRLDVRICIGSVGIYSC.

An ATP-binding site is contributed by 100–107; it reads GESGSGKS.

Belongs to the RecA family.

Its subcellular location is the nucleus. In terms of biological role, involved in recombination DNA repair and in the repair of gamma-ray-induced damage. The sequence is that of DNA repair protein rhp57 (rhp57) from Schizosaccharomyces pombe (strain 972 / ATCC 24843) (Fission yeast).